The following is a 466-amino-acid chain: Ras-GEF domain-containing family member 1C (466 aa).

The segment at 1–37 is disordered; the sequence is MPQTLSASDMVTPGSLSPPPTEPTDGEQAGQPLLDGA. Residues 34 to 164 form the N-terminal Ras-GEF domain; that stretch reads LDGAPSSASL…LLQALHQKLA (131 aa). In terms of domain architecture, Ras-GEF spans 200–446; it reads DPYTLAQQLT…YLASYESESP (247 aa).

Guanine nucleotide exchange factor (GEF). The sequence is that of Ras-GEF domain-containing family member 1C (RASGEF1C) from Homo sapiens (Human).